Reading from the N-terminus, the 328-residue chain is Phosphate acyltransferase (328 aa).

It belongs to the PlsX family. Homodimer. Probably interacts with PlsY.

It localises to the cytoplasm. It carries out the reaction a fatty acyl-[ACP] + phosphate = an acyl phosphate + holo-[ACP]. It functions in the pathway lipid metabolism; phospholipid metabolism. Functionally, catalyzes the reversible formation of acyl-phosphate (acyl-PO(4)) from acyl-[acyl-carrier-protein] (acyl-ACP). This enzyme utilizes acyl-ACP as fatty acyl donor, but not acyl-CoA. The protein is Phosphate acyltransferase of Campylobacter jejuni subsp. jejuni serotype O:6 (strain 81116 / NCTC 11828).